Here is a 232-residue protein sequence, read N- to C-terminus: Ras association domain-containing protein 3 (232 aa).

Ser-2 carries the N-acetylserine modification. Positions 25–46 (RAPPGKSRSGQPDVEKEKETHN) are disordered. A compositionally biased stretch (basic and acidic residues) spans 37–46 (DVEKEKETHN). The region spanning 78–180 (YTGFIKVQME…TLSFVLREHE (103 aa)) is the Ras-associating domain. One can recognise an SARAH domain in the interval 181-228 (IGEWEAFSLPELQNFLRILDKEEDEQLQSLKRRYTAYRQKLEEALGEV).

Its subcellular location is the cytoplasm. It localises to the cytoskeleton. The chain is Ras association domain-containing protein 3 (Rassf3) from Mus musculus (Mouse).